We begin with the raw amino-acid sequence, 252 residues long: MITKRIIPCLDVKEGRVVKGIQFLGLKDAGDPVELAEAYDRESADELVFLDISASHEGRKTMTDVVEQVAAKLAIPFTVGGGINQLSDMKRMLRAGADKVSVNTAAVLRPELITEGADFFGSQCIVAAIDAKYDEDSDCYKVYTHGGRQKTEWEVTAWAKEAVSRGAGEILLTSMDADGEKTGFNHTLTQLVTRAVPVPVIASGGAGSARHMLEAFTIGEADAALAASIFHYKETSIKEVKDYMKKHGVNVR.

Catalysis depends on residues aspartate 11 and aspartate 130.

The protein belongs to the HisA/HisF family. As to quaternary structure, heterodimer of HisH and HisF.

The protein resides in the cytoplasm. It carries out the reaction 5-[(5-phospho-1-deoxy-D-ribulos-1-ylimino)methylamino]-1-(5-phospho-beta-D-ribosyl)imidazole-4-carboxamide + L-glutamine = D-erythro-1-(imidazol-4-yl)glycerol 3-phosphate + 5-amino-1-(5-phospho-beta-D-ribosyl)imidazole-4-carboxamide + L-glutamate + H(+). The protein operates within amino-acid biosynthesis; L-histidine biosynthesis; L-histidine from 5-phospho-alpha-D-ribose 1-diphosphate: step 5/9. Its function is as follows. IGPS catalyzes the conversion of PRFAR and glutamine to IGP, AICAR and glutamate. The HisF subunit catalyzes the cyclization activity that produces IGP and AICAR from PRFAR using the ammonia provided by the HisH subunit. The protein is Imidazole glycerol phosphate synthase subunit HisF of Bacillus velezensis (strain DSM 23117 / BGSC 10A6 / LMG 26770 / FZB42) (Bacillus amyloliquefaciens subsp. plantarum).